Consider the following 200-residue polypeptide: 3-isopropylmalate dehydratase small subunit (200 aa).

Belongs to the LeuD family. LeuD type 1 subfamily. Heterodimer of LeuC and LeuD.

It carries out the reaction (2R,3S)-3-isopropylmalate = (2S)-2-isopropylmalate. Its pathway is amino-acid biosynthesis; L-leucine biosynthesis; L-leucine from 3-methyl-2-oxobutanoate: step 2/4. Catalyzes the isomerization between 2-isopropylmalate and 3-isopropylmalate, via the formation of 2-isopropylmaleate. The chain is 3-isopropylmalate dehydratase small subunit from Vibrio vulnificus (strain YJ016).